A 617-amino-acid chain; its full sequence is BTB/POZ domain-containing protein At3g08570 (617 aa).

Residues 36–106 (GDITIVVDGE…CYGINFEITI (71 aa)) form the BTB domain. One can recognise an NPH3 domain in the interval 210 to 490 (EWWIEDLSAL…VRVLYSEQLR (281 aa)). Tyr431 is modified (phosphotyrosine). Disordered regions lie at residues 505-525 (LSSQKHSSENPSRAVSPRDTY) and 585-617 (GGGPTEGKLRNANRKSKSRLERKTVRSRPESMF). Positions 602-617 (SRLERKTVRSRPESMF) are enriched in basic and acidic residues.

The protein belongs to the NPH3 family.

It functions in the pathway protein modification; protein ubiquitination. In terms of biological role, may act as a substrate-specific adapter of an E3 ubiquitin-protein ligase complex (CUL3-RBX1-BTB) which mediates the ubiquitination and subsequent proteasomal degradation of target proteins. This Arabidopsis thaliana (Mouse-ear cress) protein is BTB/POZ domain-containing protein At3g08570.